A 394-amino-acid chain; its full sequence is Elongation factor Tu (394 aa).

Positions 10–204 (KPHVNIGTIG…AVDSYIPQPV (195 aa)) constitute a tr-type G domain. The tract at residues 19–26 (GHVDHGKT) is G1. 19–26 (GHVDHGKT) is a binding site for GTP. Threonine 26 is a binding site for Mg(2+). The G2 stretch occupies residues 60–64 (GITIS). A G3 region spans residues 81–84 (DCPG). GTP is bound by residues 81–85 (DCPGH) and 136–139 (NKVD). The tract at residues 136 to 139 (NKVD) is G4. A G5 region spans residues 174-176 (SAL).

The protein belongs to the TRAFAC class translation factor GTPase superfamily. Classic translation factor GTPase family. EF-Tu/EF-1A subfamily. As to quaternary structure, monomer.

It is found in the cytoplasm. It carries out the reaction GTP + H2O = GDP + phosphate + H(+). In terms of biological role, GTP hydrolase that promotes the GTP-dependent binding of aminoacyl-tRNA to the A-site of ribosomes during protein biosynthesis. This chain is Elongation factor Tu, found in Rickettsia felis (strain ATCC VR-1525 / URRWXCal2) (Rickettsia azadi).